We begin with the raw amino-acid sequence, 425 residues long: Serine--tRNA ligase (425 aa).

230–232 lines the L-serine pocket; the sequence is TSE. ATP is bound by residues 261–263 and Val277; that span reads RRE. Position 284 (Glu284) interacts with L-serine. 348–351 is a binding site for ATP; sequence ELTS. Thr382 contributes to the L-serine binding site.

It belongs to the class-II aminoacyl-tRNA synthetase family. Type-1 seryl-tRNA synthetase subfamily. In terms of assembly, homodimer. The tRNA molecule binds across the dimer.

It is found in the cytoplasm. The enzyme catalyses tRNA(Ser) + L-serine + ATP = L-seryl-tRNA(Ser) + AMP + diphosphate + H(+). It carries out the reaction tRNA(Sec) + L-serine + ATP = L-seryl-tRNA(Sec) + AMP + diphosphate + H(+). The protein operates within aminoacyl-tRNA biosynthesis; selenocysteinyl-tRNA(Sec) biosynthesis; L-seryl-tRNA(Sec) from L-serine and tRNA(Sec): step 1/1. Its function is as follows. Catalyzes the attachment of serine to tRNA(Ser). Is also able to aminoacylate tRNA(Sec) with serine, to form the misacylated tRNA L-seryl-tRNA(Sec), which will be further converted into selenocysteinyl-tRNA(Sec). This chain is Serine--tRNA ligase, found in Streptomyces coelicolor (strain ATCC BAA-471 / A3(2) / M145).